A 133-amino-acid chain; its full sequence is Small ribosomal subunit protein uS8 (133 aa).

Belongs to the universal ribosomal protein uS8 family. As to quaternary structure, part of the 30S ribosomal subunit. Contacts proteins S5 and S12.

In terms of biological role, one of the primary rRNA binding proteins, it binds directly to 16S rRNA central domain where it helps coordinate assembly of the platform of the 30S subunit. This Chloroflexus aurantiacus (strain ATCC 29364 / DSM 637 / Y-400-fl) protein is Small ribosomal subunit protein uS8.